The following is a 367-amino-acid chain: Inositol-3-phosphate synthase (367 aa).

Ser-2 bears the N-acetylserine mark. Lys-73 participates in a covalent cross-link: Isoglutamyl lysine isopeptide (Lys-Gln) (interchain with Q-Cter in protein Pup). NAD(+) contacts are provided by Asp-78, Ala-137, Tyr-157, Ser-200, Asp-235, and Lys-248.

It belongs to the myo-inositol 1-phosphate synthase family. NAD(+) serves as cofactor. Pupylated at Lys-73 by the prokaryotic ubiquitin-like protein Pup, which leads to its degradation by the proteasome.

The enzyme catalyses D-glucose 6-phosphate = 1D-myo-inositol 3-phosphate. Its function is as follows. Key enzyme in myo-inositol biosynthesis pathway that catalyzes the conversion of glucose 6-phosphate to 1D-myo-inositol 3-phosphate in a NAD-dependent manner. The protein is Inositol-3-phosphate synthase (ino1) of Mycobacterium tuberculosis (strain ATCC 25618 / H37Rv).